The sequence spans 450 residues: Beclin-1 (450 aa).

Methionine 1 is modified (N-acetylmethionine). Phosphoserine is present on residues serine 15 and serine 30. Positions 48-72 are disordered; sequence TTAQAKPGETQEEETNSGEEPFIET. 3 positions are modified to phosphoserine; by AMPK: serine 90, serine 93, and serine 96. A BH3 motif is present at residues 108–127; the sequence is TMENLSRRLKVTGDLFDIMS. Positions 112-159 are interaction with BCL2 and BCL2L1 isoform Bcl-X(L); it reads LSRRLKVTGDLFDIMSGQTDVDHPLCEECTDTLLDQLDTQLNVTENEC. At threonine 119 the chain carries Phosphothreonine; by DAPK1. A coiled-coil region spans residues 142–270; that stretch reads DTLLDQLDTQ…LDKLKKTNVF (129 aa). The tract at residues 245-450 is evolutionary conserved domain (ECD); it reads DELKSVENQM…AWVSSQFYNK (206 aa). Residues lysine 402 and lysine 437 each participate in a glycyl lysine isopeptide (Lys-Gly) (interchain with G-Cter in ubiquitin) cross-link. The required for membrane-association stretch occupies residues 425–450; that stretch reads WTKALKFMLTNLKWGLAWVSSQFYNK.

Belongs to the beclin family. In terms of assembly, a homodimeric form is proposed to exist; this metastable form readily transits to ATG14- or UVRAG-containing complexes with BECN1:UVRAG being more stable than BECN1:ATG14. Component of the PI3K (PI3KC3/PI3K-III/class III phosphatidylinositol 3-kinase) complex the core of which is composed of the catalytic subunit PIK3C3, the regulatory subunit PIK3R4 and BECN1 associating with additional regulatory/auxiliary subunits to form alternative complex forms. Alternative complex forms containing a fourth regulatory subunit in a mutually exclusive manner are PI3K complex I (PI3KC3-C1) containing ATG14, and PI3K complex II (PI3KC3-C2) containing UVRAG. PI3KC3-C1 displays a V-shaped architecture with PIK3R4 serving as a bridge between PIK3C3 and the ATG14:BECN1 subcomplex. Both, PI3KC3-C1 and PI3KC3-C2, can associate with further regulatory subunits, such as RUBCN, SH3GLB1/Bif-1 and AMBRA1. PI3KC3-C1 probably associates with PIK3CB. Forms a complex with PPP2CA and AMBRA1; AMBRA1 and BECN1 components of the complex regulate MYC stability via different pathways. Component of the complex, at least composed of LRPPRC, BECN1 and BCL2; the interactions prevent BECN1 from forming an autophagy-inducing complex with PIK3C3. Interacts with AMBRA1, GOPC, GRID2. Interacts with BCL2 and BCL2L1 isoform Bcl-X(L); the interaction inhibits BECN1 function in promoting autophagy by interfering with the formation of the PI3K complex. Interacts with cytosolic HMGB1; inhibits the interaction of BECN1 and BCL2 leading to promotion of autophagy. Interacts with USP10, USP13, VMP1, DAPK1, RAB39A. Interacts with the poly-Gln domain of ATXN3; the interaction causes deubiquitination at Lys-402 and stabilizes BECN1. Interacts with SLAMF1. Interacts with TRIM5; the interaction causes activation of BECN1 by causing its dissociation from its inhibitors BCL2 and TAB2. Interacts with active ULK1 (phosphorylated on 'Ser-317') and MEFV simultaneously. Interacts with WDR81 and WDR91; negatively regulates the PI3 kinase/PI3K activity associated with endosomal membranes. Interacts with LAPTM4B; competes with EGFR for LAPTM4B binding; regulates EGFR activity. Interacts with TRIM50. Interacts with TRIM16. Interacts with ATG14; this interaction is increased in the absence of TMEM39A. Interacts with WASHC1; preventing interaction with AMBRA1 and the DCX(AMBRA1) complex and subsequent ubiquitination. Interacts with TRIM17. Interacts with BCL2L10/BCL-B (via BH1 domain). Interacts with SH3BGRL. Interacts with IRGM; enhancing BECN1-interacting partners and influencing the composition of the BECN1 complex. Interacts with ARMC3. Interacts with LRPPRC. As to quaternary structure, (Microbial infection) Interacts with human cytomegalovirus/HHV-5 protein TRS1. (Microbial infection) Interacts with murine gammaherpesvirus 68 M11. In terms of assembly, (Microbial infection) Interacts with herpes simplex virus 1 (HHV-1) protein ICP34.5; this interaction antagonizes the host autophagy response. As to quaternary structure, (Microbial infection) Interacts with Epstein-Barr virus protein BHRF1; this interaction inhibits BECN1-mediated autophagy induction. Post-translationally, phosphorylation at Thr-119 by DAPK1 reduces its interaction with BCL2 and BCL2L1 and promotes induction of autophagy. In response to autophagic stimuli, phosphorylated at serine residues by AMPK in an ATG14-dependent manner, and this phosphorylation is critical for maximally efficient autophagy. Polyubiquitinated by NEDD4, both with 'Lys-11'- and 'Lys-63'-linkages. 'Lys-11'-linked polyubiquitination leads to degradation and is enhanced when the stabilizing interaction partner VPS34 is depleted. Deubiquitinated by USP10 and USP13, leading to stabilize the PIK3C3/VPS34-containing complexes. Polyubiquitinated at Lys-402 with 'Lys-48'-linkages. 'Lys-48'-linked polyubiquitination of Lys-402 leads to degradation. Deubiquitinated by ATXN3, leading to stabilization. Ubiquitinated at Lys-437 via 'Lys-63'-linkage by the DCX(AMBRA1) complex, thereby increasing the association between BECN1 and PIK3C3 to promote PIK3C3 activity. 'Lys-48'-linked ubiquitination by RNF216 leads to proteasomal degradation and autophagy inhibition. In terms of processing, proteolytically processed by caspases including CASP8 and CASP3; the C-terminal fragments lack autophagy-inducing capacity and are proposed to induce apoptosis. Thus the cleavage is proposed to be an determinant to switch from autophagy to apoptosis pathways affecting cellular homeostasis including viral infections and survival of tumor cells. As to expression, ubiquitous.

The protein resides in the cytoplasm. The protein localises to the golgi apparatus. It is found in the trans-Golgi network membrane. It localises to the endosome membrane. Its subcellular location is the endoplasmic reticulum membrane. The protein resides in the mitochondrion membrane. The protein localises to the endosome. It is found in the cytoplasmic vesicle. It localises to the autophagosome. Its subcellular location is the mitochondrion. The protein resides in the nucleus. In terms of biological role, plays a central role in autophagy. Acts as a core subunit of the PI3K complex that mediates formation of phosphatidylinositol 3-phosphate; different complex forms are believed to play a role in multiple membrane trafficking pathways: PI3KC3-C1 is involved in initiation of autophagosomes and PI3KC3-C2 in maturation of autophagosomes and endocytosis. Involved in regulation of degradative endocytic trafficking and required for the abscission step in cytokinesis, probably in the context of PI3KC3-C2. Essential for the formation of PI3KC3-C2 but not PI3KC3-C1 PI3K complex forms. Involved in endocytosis. May play a role in antiviral host defense. Beclin-1-C 35 kDa localized to mitochondria can promote apoptosis; it induces the mitochondrial translocation of BAX and the release of proapoptotic factors. Functionally, (Microbial infection) Protects against infection by a neurovirulent strain of Sindbis virus. In Homo sapiens (Human), this protein is Beclin-1 (BECN1).